Reading from the N-terminus, the 68-residue chain is Gallinacin-10 (68 aa).

A signal peptide spans 1-19 (MKILCLLFAVLLFLFQAAP). The propeptide occupies 20 to 25 (GSADPL). 3 disulfides stabilise this stretch: C32–C61, C39–C54, and C44–C62.

Belongs to the beta-defensin family. Strong expression in the testis, liver, gall bladder and kidney. Also expressed in the ovary and male and female reproductive tracts. Expressed in the ovarian stroma and the theca and granulosa layers of the ovarian follicle.

The protein resides in the secreted. Its subcellular location is the cytoplasmic granule. Has bactericidal activity. This Gallus gallus (Chicken) protein is Gallinacin-10 (GAL10).